Consider the following 226-residue polypeptide: Isoprenyl transferase (226 aa).

Residue Asp12 is part of the active site. Asp12 is a binding site for Mg(2+). Residues 13 to 16 (GNAR), Trp17, Lys25, His29, and 57 to 59 (SFE) each bind substrate. The active-site Proton acceptor is Asn60. Substrate is bound by residues Trp61, Arg63, Arg174, and 180-182 (RIS). Residue Glu193 participates in Mg(2+) binding.

Belongs to the UPP synthase family. In terms of assembly, homodimer. It depends on Mg(2+) as a cofactor.

Its function is as follows. Catalyzes the condensation of isopentenyl diphosphate (IPP) with allylic pyrophosphates generating different type of terpenoids. This Rickettsia prowazekii (strain Madrid E) protein is Isoprenyl transferase.